The sequence spans 78 residues: UPF0291 protein LBUL_1264 (78 aa).

Belongs to the UPF0291 family.

The protein localises to the cytoplasm. The sequence is that of UPF0291 protein LBUL_1264 from Lactobacillus delbrueckii subsp. bulgaricus (strain ATCC BAA-365 / Lb-18).